The primary structure comprises 187 residues: Elongation factor P (187 aa).

Belongs to the elongation factor P family.

Its subcellular location is the cytoplasm. It participates in protein biosynthesis; polypeptide chain elongation. Involved in peptide bond synthesis. Stimulates efficient translation and peptide-bond synthesis on native or reconstituted 70S ribosomes in vitro. Probably functions indirectly by altering the affinity of the ribosome for aminoacyl-tRNA, thus increasing their reactivity as acceptors for peptidyl transferase. The sequence is that of Elongation factor P from Treponema denticola (strain ATCC 35405 / DSM 14222 / CIP 103919 / JCM 8153 / KCTC 15104).